A 242-amino-acid polypeptide reads, in one-letter code: uncharacterized protein (242 aa).

This is an uncharacterized protein from Haemophilus influenzae (strain ATCC 51907 / DSM 11121 / KW20 / Rd).